Reading from the N-terminus, the 459-residue chain is ATP synthase subunit beta (459 aa).

ATP is bound at residue 148–155 (GGAGVGKT).

The protein belongs to the ATPase alpha/beta chains family. F-type ATPases have 2 components, CF(1) - the catalytic core - and CF(0) - the membrane proton channel. CF(1) has five subunits: alpha(3), beta(3), gamma(1), delta(1), epsilon(1). CF(0) has three main subunits: a(1), b(2) and c(9-12). The alpha and beta chains form an alternating ring which encloses part of the gamma chain. CF(1) is attached to CF(0) by a central stalk formed by the gamma and epsilon chains, while a peripheral stalk is formed by the delta and b chains.

Its subcellular location is the cell inner membrane. It catalyses the reaction ATP + H2O + 4 H(+)(in) = ADP + phosphate + 5 H(+)(out). Its function is as follows. Produces ATP from ADP in the presence of a proton gradient across the membrane. The catalytic sites are hosted primarily by the beta subunits. The sequence is that of ATP synthase subunit beta from Thioalkalivibrio sulfidiphilus (strain HL-EbGR7).